Reading from the N-terminus, the 102-residue chain is Small ribosomal subunit protein uS10 (102 aa).

Belongs to the universal ribosomal protein uS10 family. As to quaternary structure, part of the 30S ribosomal subunit.

Involved in the binding of tRNA to the ribosomes. The polypeptide is Small ribosomal subunit protein uS10 (Thermosipho africanus (strain TCF52B)).